We begin with the raw amino-acid sequence, 616 residues long: Chaperone protein HscA (616 aa).

It belongs to the heat shock protein 70 family.

Chaperone involved in the maturation of iron-sulfur cluster-containing proteins. Has a low intrinsic ATPase activity which is markedly stimulated by HscB. Involved in the maturation of IscU. This is Chaperone protein HscA from Klebsiella pneumoniae subsp. pneumoniae (strain ATCC 700721 / MGH 78578).